A 295-amino-acid polypeptide reads, in one-letter code: Trehalose/maltose transport system permease protein MalF (295 aa).

Transmembrane regions (helical) follow at residues 16 to 36 (LGYLMILPLLTVVLVFIILPV), 79 to 99 (VSFSFVSVSLETILGLSFALI), 112 to 132 (AIVLIPWAVPTIISARTWELM), 146 to 166 (ILGVSPVNWLGTPISAFFAIV), 210 to 230 (ITLPLLKPVLIVALILRTIDA), 236 to 256 (IIYVLTGGGPGGATTSISLLA), and 267 to 287 (IGSAISILTFVLVLSFTIVYL). Positions 75–286 (TFVTVSFSFV…VLVLSFTIVY (212 aa)) constitute an ABC transmembrane type-1 domain.

This sequence belongs to the binding-protein-dependent transport system permease family. In terms of assembly, the complex is composed of two ATP-binding proteins (MalK), two transmembrane proteins (MalG and MalF) and a solute-binding protein (MalE).

It is found in the cell membrane. In terms of biological role, part of the ABC transporter complex MalEFGK involved in trehalose/maltose import. Responsible for the translocation of the substrate across the membrane. This is Trehalose/maltose transport system permease protein MalF (malF) from Thermococcus litoralis (strain ATCC 51850 / DSM 5473 / JCM 8560 / NS-C).